A 505-amino-acid polypeptide reads, in one-letter code: Maturase K (505 aa).

The protein belongs to the intron maturase 2 family. MatK subfamily.

Its subcellular location is the plastid. It localises to the chloroplast. In terms of biological role, usually encoded in the trnK tRNA gene intron. Probably assists in splicing its own and other chloroplast group II introns. The sequence is that of Maturase K from Apocynum androsaemifolium (Spreading dogbane).